A 337-amino-acid chain; its full sequence is DNA-directed RNA polymerase subunit alpha (337 aa).

Residues 1–226 form an alpha N-terminal domain (alpha-NTD) region; that stretch reads MLIAQRPTLT…ELFGLARELN (226 aa). The interval 243–337 is alpha C-terminal domain (alpha-CTD); that stretch reads LAADLALEIE…DTSFAEDEQL (95 aa). A disordered region spans residues 315-337; that stretch reads FDPSAVVNDFEDDDTSFAEDEQL. Residues 323–337 are compositionally biased toward acidic residues; it reads DFEDDDTSFAEDEQL.

It belongs to the RNA polymerase alpha chain family. Homodimer. The RNAP catalytic core consists of 2 alpha, 1 beta, 1 beta' and 1 omega subunit. When a sigma factor is associated with the core the holoenzyme is formed, which can initiate transcription.

It carries out the reaction RNA(n) + a ribonucleoside 5'-triphosphate = RNA(n+1) + diphosphate. DNA-dependent RNA polymerase catalyzes the transcription of DNA into RNA using the four ribonucleoside triphosphates as substrates. The chain is DNA-directed RNA polymerase subunit alpha from Kineococcus radiotolerans (strain ATCC BAA-149 / DSM 14245 / SRS30216).